Consider the following 275-residue polypeptide: Adenylate kinase (275 aa).

54–59 lines the ATP pocket; it reads GAGKGT. The segment at 74–103 is NMP; sequence ATGDMLRSQVAKKTPLGREAKKIMDQGGLV. Residues threonine 75, arginine 80, 101–103, 130–133, and glutamine 137 contribute to the AMP site; these read GLV and GFPR. The interval 171–208 is LID; the sequence is GRLVHPASGRSYHRVFNPPKADMKDDITGEPLVSRSDD. Residues arginine 172 and 181–182 each bind ATP; that span reads SY. Arginine 205 and arginine 216 together coordinate AMP. An ATP-binding site is contributed by glutamine 244.

It belongs to the adenylate kinase family. AK2 subfamily. Monomer.

The protein localises to the cytoplasm. It is found in the cytosol. It localises to the mitochondrion intermembrane space. It catalyses the reaction AMP + ATP = 2 ADP. Functionally, catalyzes the reversible transfer of the terminal phosphate group between ATP and AMP. Plays an important role in cellular energy homeostasis and in adenine nucleotide metabolism. Adenylate kinase activity is critical for regulation of the phosphate utilization and the AMP de novo biosynthesis pathways. The chain is Adenylate kinase (adk1) from Botryotinia fuckeliana (strain B05.10) (Noble rot fungus).